We begin with the raw amino-acid sequence, 471 residues long: Argininosuccinate lyase (471 aa).

The protein belongs to the lyase 1 family. Argininosuccinate lyase subfamily.

The protein localises to the cytoplasm. It catalyses the reaction 2-(N(omega)-L-arginino)succinate = fumarate + L-arginine. Its pathway is amino-acid biosynthesis; L-arginine biosynthesis; L-arginine from L-ornithine and carbamoyl phosphate: step 3/3. This chain is Argininosuccinate lyase, found in Cereibacter sphaeroides (strain ATCC 17025 / ATH 2.4.3) (Rhodobacter sphaeroides).